The primary structure comprises 1392 residues: ABC transporter G family member 42 (1392 aa).

Residues 1–18 are compositionally biased toward polar residues; the sequence is MTMSQTDGVEFASRNTNE. The disordered stretch occupies residues 1–26; it reads MTMSQTDGVEFASRNTNENGHDDDDQ. The ABC transporter 1 domain maps to 139–413; that stretch reads SKLSRFMCSN…FEDCGFKCPN (275 aa). An ATP-binding site is contributed by 173–180; that stretch reads GPPSCGKT. The ABC transmembrane type-2 1 domain maps to 491–703; that stretch reads DMLKACSRRE…AEIGLTANEF (213 aa). 6 helical membrane passes run 509–529, 543–563, 596–616, 627–647, 652–672, and 739–759; these read FVYV…MTVY, YLMG…LPEL, IPIS…VIGY, FLIL…IAAV, VVAT…GGFI, and FGAL…ALTF. Positions 800 to 1045 constitute an ABC transporter 2 domain; sequence FTFQDVQYII…VIEYFMRIHG (246 aa). 837–844 lines the ATP pocket; sequence GVSGAGKT. In terms of domain architecture, ABC transmembrane type-2 2 spans 1117–1331; that stretch reads EQFKACLWKQ…VLNGLLTSQY (215 aa). Transmembrane regions (helical) follow at residues 1136–1156, 1175–1195, 1215–1237, 1255–1275, 1281–1301, 1309–1329, and 1364–1384; these read YNLT…ILFW, MFTV…FSVA, YSLA…YVII, FYSI…LVVV, IAFT…GYVM, WWIW…LLTS, and LVAV…AFFI.

The protein belongs to the ABC transporter superfamily. ABCG family. PDR (TC 3.A.1.205) subfamily. Confined to shoots.

It localises to the membrane. Its function is as follows. May be a general defense protein. The chain is ABC transporter G family member 42 (ABCG42) from Arabidopsis thaliana (Mouse-ear cress).